Here is a 150-residue protein sequence, read N- to C-terminus: Multiprotein-bridging factor 1 (150 aa).

Residues 36 to 71 (SSESKGAGQSKGPADHQRIAKLDRDDAPKPPEKVSA) are disordered. The span at 48-70 (PADHQRIAKLDRDDAPKPPEKVS) shows a compositional bias: basic and acidic residues. In terms of domain architecture, HTH cro/C1-type spans 84 to 137 (IKNAEGKSMTQKELATSVNAKPQDIADLESGRAVPDQALLGKLERKLNVKLRGA). The H-T-H motif DNA-binding region spans 94–113 (QKELATSVNAKPQDIADLES).

Belongs to the MBF1 family.

Transcriptional coactivator that stimulates GCN4-dependent transcriptional activity by bridging the DNA-binding region of GCN4 and TBP (SPT15), thereby recruiting TBP to GCN4-bound promoters. Involved in induction of the ribosome quality control (RQC) pathway; a pathway that degrades nascent peptide chains during problematic translation. Required to prevent stalled ribosomes from frameshifting. This Cryptococcus neoformans var. neoformans serotype D (strain B-3501A) (Filobasidiella neoformans) protein is Multiprotein-bridging factor 1 (MBF1).